Consider the following 551-residue polypeptide: Histone-lysine N-methyltransferase SETDB2 (551 aa).

Positions 146-210 (LLGHNPLRAP…DRFSFSTQVC (65 aa)) constitute an MBD domain. The Pre-SET domain occupies 269–329 (VCCDCTDGCT…RCENRVVQKG (61 aa)). Positions 271, 273, 277, 283, 285, 310, 314, 316, and 321 each coordinate Zn(2+). The SET domain occupies 332-537 (VRLQVFRTPE…AGTELTWSCT (206 aa)). 342–344 (HMW) serves as a coordination point for S-adenosyl-L-methionine. Residues 426-447 (SLAQRRDQQQFSISSETEDNRC) are disordered. Residues Arg491 and 494–495 (TH) contribute to the S-adenosyl-L-methionine site.

Belongs to the class V-like SAM-binding methyltransferase superfamily.

It is found in the nucleus. It localises to the chromosome. It carries out the reaction N(6),N(6)-dimethyl-L-lysyl(9)-[histone H3] + S-adenosyl-L-methionine = N(6),N(6),N(6)-trimethyl-L-lysyl(9)-[histone H3] + S-adenosyl-L-homocysteine + H(+). Histone methyltransferase involved in left-right axis specification in early development and mitosis. Specifically trimethylates 'Lys-9' of histone H3 (H3K9me3). H3K9me3 represents a specific tag for epigenetic transcriptional repression by recruiting HP1 (CBX1, CBX3 and/or CBX5) proteins to methylated histones. Contributes to H3K9me3 in both the interspersed repetitive elements and centromere-associated repeats. Plays a role in chromosome condensation and segregation during mitosis. During early development, required to specify the left-right axis by repressing expression of FGF8, leading to negatively regulate the dorsal organizer formation. This Danio rerio (Zebrafish) protein is Histone-lysine N-methyltransferase SETDB2 (setdb2).